A 152-amino-acid chain; its full sequence is MKEVTIYTDGACSGNPGPGGWGAVLIYGDKRKELSGAEPSTTNQRMEITAAIAALRVLKEPCRVHLYSDSAYLVNAFRQGWLARWERNGWLTVKKQPVENQDLWRELLQVASRHQVEWLKVKGHSDNPENNRCDELARAAIAALRRQEIPSS.

The region spanning 1 to 142 is the RNase H type-1 domain; sequence MKEVTIYTDG…CDELARAAIA (142 aa). Positions 9, 47, 69, and 134 each coordinate Mg(2+).

This sequence belongs to the RNase H family. In terms of assembly, monomer. The cofactor is Mg(2+).

The protein localises to the cytoplasm. The catalysed reaction is Endonucleolytic cleavage to 5'-phosphomonoester.. In terms of biological role, endonuclease that specifically degrades the RNA of RNA-DNA hybrids. This Moorella thermoacetica (strain ATCC 39073 / JCM 9320) protein is Ribonuclease H.